Here is a 248-residue protein sequence, read N- to C-terminus: Granzyme-like protein 2 (248 aa).

The first 18 residues, 1–18 (MFLFLIFLVAVLPVNTEG), serve as a signal peptide directing secretion. A propeptide spans 19–20 (GE) (activation peptide). The Peptidase S1 domain maps to 21–243 (IVWGTESKPH…FIPWIQKTMK (223 aa)). C50 and C66 are joined by a disulfide. Active-site charge relay system residues include H65 and D108. 2 disulfide bridges follow: C142–C207 and C172–C186. N152 and N180 each carry an N-linked (GlcNAc...) asparagine glycan. The active-site Charge relay system is S201.

This sequence belongs to the peptidase S1 family. Granzyme subfamily. In terms of tissue distribution, duodenum, lung and spleen.

Functionally, this enzyme is necessary for target cell lysis in cell-mediated immune responses. The polypeptide is Granzyme-like protein 2 (Rattus norvegicus (Rat)).